Reading from the N-terminus, the 450-residue chain is Solute carrier family 52, riboflavin transporter, member 2 (450 aa).

The next 5 helical transmembrane spans lie at 14–34 (LLVA…WVEL), 47–67 (LPSY…LVTL), 86–106 (GLGI…APVA), 112–132 (VAFL…NVTF), and 147–167 (FFLG…GQGV). Asn178 carries N-linked (GlcNAc...) asparagine glycosylation. The chain crosses the membrane as a helical span at residues 201–221 (FFWVLTALLGTSAAAFQGLLL). Low complexity predominate over residues 227 to 236 (TSEPTTGTGL). Residues 227-264 (TSEPTTGTGLRVETPGTEEEEEEEEASPLQEPPGQVAG) form a disordered region. Over residues 242 to 252 (GTEEEEEEEEA) the composition is skewed to acidic residues. 5 helical membrane passes run 282–302 (ACLL…LPAV), 317–337 (LAVV…MAVL), 344–364 (LCGL…LAAL), 369–389 (PLVG…LCAG), and 409–429 (ALLA…VAMF).

This sequence belongs to the riboflavin transporter family.

Its subcellular location is the cell membrane. It carries out the reaction riboflavin(in) = riboflavin(out). With respect to regulation, riboflavin transport is Na(+)-independent but moderately pH-sensitive. Activity is strongly inhibited by riboflavin analogs, such as lumiflavin. Weakly inhibited by flavin adenine dinucleotide (FAD) and flavin mononucleotide (FMN). Plasma membrane transporter mediating the uptake by cells of the water soluble vitamin B2/riboflavin that plays a key role in biochemical oxidation-reduction reactions of the carbohydrate, lipid, and amino acid metabolism. May also act as a receptor for 4-hydroxybutyrate. In Mus musculus (Mouse), this protein is Solute carrier family 52, riboflavin transporter, member 2 (Slc52a2).